A 135-amino-acid polypeptide reads, in one-letter code: Endoribonuclease YbeY (135 aa).

The Zn(2+) site is built by His102, His106, and His112.

It belongs to the endoribonuclease YbeY family. The cofactor is Zn(2+).

The protein resides in the cytoplasm. In terms of biological role, single strand-specific metallo-endoribonuclease involved in late-stage 70S ribosome quality control and in maturation of the 3' terminus of the 16S rRNA. This chain is Endoribonuclease YbeY, found in Rubrobacter xylanophilus (strain DSM 9941 / JCM 11954 / NBRC 16129 / PRD-1).